Consider the following 161-residue polypeptide: Nucleotide-binding protein RSc2549 (161 aa).

Belongs to the YajQ family.

Nucleotide-binding protein. In Ralstonia nicotianae (strain ATCC BAA-1114 / GMI1000) (Ralstonia solanacearum), this protein is Nucleotide-binding protein RSc2549.